Here is a 62-residue protein sequence, read N- to C-terminus: Histone H1.2, embryonic (62 aa).

One can recognise an H15 domain in the interval 1–53 (HVVAAITALKERGGSSMKKQSVFIKKALKSGVEKGTLVQVKGKGASGSFKLGK).

It belongs to the histone H1/H5 family.

The protein localises to the nucleus. Its subcellular location is the chromosome. In terms of biological role, histones H1 are necessary for the condensation of nucleosome chains into higher-order structures. In Parechinus angulosus (Angulate sea urchin), this protein is Histone H1.2, embryonic.